The chain runs to 331 residues: Meiotic recombination protein W68 (331 aa).

The Topo IIA-type catalytic domain maps to 1–120 (MDEFSENIER…LGILAASKGL (120 aa)). Tyr81 acts as the O-(5'-phospho-DNA)-tyrosine intermediate in catalysis. Mg(2+) contacts are provided by Glu167 and Asp221.

Belongs to the TOP6A family. Requires Mg(2+) as cofactor.

The protein localises to the nucleus. The catalysed reaction is ATP-dependent breakage, passage and rejoining of double-stranded DNA.. Functionally, required for meiotic recombination. Together with mei-P22, mediates DNA cleavage that forms the double-strand breaks (DSB) that initiate meiotic recombination. The sequence is that of Meiotic recombination protein W68 from Drosophila melanogaster (Fruit fly).